The primary structure comprises 593 residues: Probable serine/threonine-protein kinase fhkA (593 aa).

The segment at 1 to 24 is disordered; sequence MSQTNYIPSTPNKSTPPSELSSTP. The FHA domain maps to 54–111; that stretch reads ITIGRSKTCNIVVPELIVSGKHCIITRADAIENGNTNYGLLMIQDQSTNGTFINGKLI. Positions 180–472 constitute a Protein kinase domain; it reads YDFIKELGSG…VEQALNHPWI (293 aa). Residues 186 to 194 and K209 contribute to the ATP site; that span reads LGSGNFSVV. The Proton acceptor role is filled by D307.

This sequence belongs to the protein kinase superfamily. CAMK Ser/Thr protein kinase family. CHK2 subfamily.

It carries out the reaction L-seryl-[protein] + ATP = O-phospho-L-seryl-[protein] + ADP + H(+). The catalysed reaction is L-threonyl-[protein] + ATP = O-phospho-L-threonyl-[protein] + ADP + H(+). The polypeptide is Probable serine/threonine-protein kinase fhkA (fhkA) (Dictyostelium discoideum (Social amoeba)).